The sequence spans 80 residues: Conotoxin Cl9.5 (80 aa).

The first 23 residues, 1–23 (MNCYLILTVALLLTSAMTGTTTA), serve as a signal peptide directing secretion. Positions 24-37 (GQLNTKGVTLREDD) are excised as a propeptide. 3 cysteine pairs are disulfide-bonded: C42–C59, C47–C69, and C49–C74.

Expressed by the venom duct.

It is found in the secreted. In Californiconus californicus (California cone), this protein is Conotoxin Cl9.5.